Reading from the N-terminus, the 471-residue chain is Methyltransferase OMS1, mitochondrial (471 aa).

A mitochondrion-targeting transit peptide spans 1-39 (MIVFRRFPTCLLHHIRQPASRSLLLESQRRSLSFTSYKY). Residues 40–103 (NSSHIDDDKS…AIARSEKFSK (64 aa)) lie on the Mitochondrial matrix side of the membrane. The chain crosses the membrane as a helical span at residues 104-123 (GMTKYMIGAYVIFLIYGLFF). Residues 124–471 (TKKLFAKDKE…LEPVPPVSKS (348 aa)) lie on the Mitochondrial intermembrane side of the membrane. The segment covering 450–463 (FEKKDDMASKKELE) has biased composition (basic and acidic residues). The disordered stretch occupies residues 450 to 471 (FEKKDDMASKKELEPVPPVSKS).

Belongs to the methyltransferase superfamily. METL family.

It is found in the mitochondrion inner membrane. Mitochondrial methyltransferase which suppresses respiratory defects caused by OXA1 mutations when overexpressed. The protein is Methyltransferase OMS1, mitochondrial (OMS1) of Saccharomyces cerevisiae (strain ATCC 204508 / S288c) (Baker's yeast).